The following is a 1196-amino-acid chain: Calcium-activated potassium channel subunit alpha-1 (1196 aa).

Topologically, residues 1–52 (MATWNASQIILNSMSNIIESPQSKPRPVMASNGASLFIPVTMEVPCDQGTRM) are extracellular. Residues 53 to 73 (WWAFLASSMVTFFGGLFIILV) traverse the membrane as a helical segment. The Cytoplasmic segment spans residues 74-146 (WRTFKYLWTV…MISAQTLTGR (73 aa)). A helical membrane pass occupies residues 147–167 (VLVVTVFALSIGALMIYFIDS). Residues 168 to 182 (SNPIESCQNFYKDFT) are Extracellular-facing. The chain crosses the membrane as a helical span at residues 183-203 (LQIDMAFNIFFLLYFGLRFIA). The Cytoplasmic segment spans residues 204 to 207 (ANDK). A helical transmembrane segment spans residues 208 to 228 (LWFWLEVNSVVDFFTVPPVFV). Residues 229–232 (SVYL) lie on the Extracellular side of the membrane. A helical; Voltage-sensor transmembrane segment spans residues 233 to 253 (NRSWLGLRFLRALRLIQFSEI). The Cytoplasmic portion of the chain corresponds to 254-268 (LQFLNILKTSNSIKL). The helical transmembrane segment at 269 to 289 (VNLCSIFISTWLTAAGFIHLV) threads the bilayer. The Extracellular segment spans residues 290 to 303 (ENSGDPWRNFENSQ). The segment at residues 304-326 (DLSYWECMYLLMVTMSTVGYGDV) is an intramembrane region (pore-forming). Residues 320–323 (TVGY) carry the Selectivity for potassium motif. Over 327–335 (YAKTTLGRL) the chain is Extracellular. A helical transmembrane segment spans residues 336 to 356 (FMVFFILGGLAMFASYVPEII). At 357-1196 (ELIGNRKKYG…PPIREVEDEC (840 aa)) the chain is on the cytoplasmic side. The 143-residue stretch at 375-517 (RKHIVVCGHI…WNWKDGDDAI (143 aa)) folds into the RCK N-terminal 1 domain. E407, Q430, and E432 together coordinate Mg(2+). Residues 524 to 544 (LGFIAQSCLAQGLSTMLANLF) are segment S7. The segment S8 stretch occupies residues 581–601 (LSFPAVCELCFVKLKLLMIAI). The tract at residues 645–649 (CKACH) is heme-binding motif. The disordered stretch occupies residues 672–697 (SALSPKKKQRNGGMRHSPNTSPNMMR). The interval 748 to 768 (VLSGHVVVCIFGDMTSALIGV) is segment S9. In terms of domain architecture, RCK N-terminal 2 spans 750-894 (SGHVVVCIFG…MERSSPDNSP (145 aa)). A Calcium bowl motif is present at residues 914–936 (TELVNDSNVQFLDQDDDDDPDTE). Ca(2+) is bound by residues Q923, D926, D929, and D931. The tract at residues 943–963 (FACGTAFAVSVLDSLMSATYF) is segment S10. The segment covering 1098–1119 (ASLSHSSHSSHSSSKKSSSVTS) has biased composition (low complexity). The disordered stretch occupies residues 1098–1149 (ASLSHSSHSSHSSSKKSSSVTSILHTASANRQNRVKARDSRDKQKMGQAEKK). Polar residues predominate over residues 1120–1129 (ILHTASANRQ). Residues 1133–1149 (KARDSRDKQKMGQAEKK) are compositionally biased toward basic and acidic residues.

It belongs to the potassium channel family. Calcium-activated (TC 1.A.1.3) subfamily. KCa1.1/KCNMA1 sub-subfamily. In terms of assembly, homotetramer; which constitutes the calcium-activated potassium channel. Expressed in both the somites and neural tube of 1 day embryos. Within the nervous system, it is restricted to dorsal parts, and expressed centrally in regions dedicated to processing of sensory information. Six hours later, it is expressed segmentally within the somites. At this time, it is expressed in a primary sensory organ, the trigeminal ganglion. By 2 days, it is also expressed in other primary sensory organs, such as the otic vesicle, and the eye. Within the retina, it is expressed to an internal layer. In the developing otic vesicle, it is abundantly expressed near the apical surface. Isoform 3 is neural-specific, and is only expressed during late stages of neuronal differentiation.

It is found in the cell membrane. The enzyme catalyses K(+)(in) = K(+)(out). With respect to regulation, ethanol and carbon monoxide-bound heme increase channel activation. Heme inhibits channel activation. Its function is as follows. Potassium channel activated by both membrane depolarization or increase in cytosolic Ca(2+) that mediates export of K(+). It is also activated by the concentration of cytosolic Mg(2+). Its activation dampens the excitatory events that elevate the cytosolic Ca(2+) concentration and/or depolarize the cell membrane. It therefore contributes to repolarization of the membrane potential. Plays a key role in controlling excitability in a number of systems, such as regulation of the contraction of smooth muscle, the tuning of hair cells in the cochlea, regulation of transmitter release, and innate immunity. In smooth muscles, its activation by high level of Ca(2+), caused by ryanodine receptors in the sarcoplasmic reticulum, regulates the membrane potential. In cochlea cells, its number and kinetic properties partly determine the characteristic frequency of each hair cell and thereby helps to establish a tonotopic map. Highly sensitive to both iberiotoxin (IbTx) and charybdotoxin (CTX). This chain is Calcium-activated potassium channel subunit alpha-1 (kcnma1), found in Xenopus laevis (African clawed frog).